The sequence spans 68 residues: Small ribosomal subunit protein bS18c (68 aa).

This sequence belongs to the bacterial ribosomal protein bS18 family. As to quaternary structure, part of the 30S ribosomal subunit.

The protein resides in the plastid. It is found in the chloroplast. In Cyanidium caldarium (Red alga), this protein is Small ribosomal subunit protein bS18c (rps18).